Consider the following 163-residue polypeptide: Cyclic pyranopterin monophosphate synthase (163 aa).

Residues 74 to 76 (MCH) and 111 to 112 (ME) each bind substrate. Asp-126 is a catalytic residue.

The protein belongs to the MoaC family. In terms of assembly, homohexamer; trimer of dimers.

The enzyme catalyses (8S)-3',8-cyclo-7,8-dihydroguanosine 5'-triphosphate = cyclic pyranopterin phosphate + diphosphate. It functions in the pathway cofactor biosynthesis; molybdopterin biosynthesis. Its function is as follows. Catalyzes the conversion of (8S)-3',8-cyclo-7,8-dihydroguanosine 5'-triphosphate to cyclic pyranopterin monophosphate (cPMP). This is Cyclic pyranopterin monophosphate synthase from Desulfitobacterium hafniense (strain DSM 10664 / DCB-2).